Consider the following 128-residue polypeptide: 3-aminoacrylate deaminase RutC (128 aa).

This sequence belongs to the RutC family. Homotrimer.

The catalysed reaction is (Z)-3-aminoacrylate + H2O + H(+) = 3-oxopropanoate + NH4(+). Functionally, involved in pyrimidine catabolism. Catalyzes the deamination of 3-aminoacrylate to malonic semialdehyde, a reaction that can also occur spontaneously. RutC may facilitate the reaction and modulate the metabolic fitness, rather than catalyzing essential functions. This is 3-aminoacrylate deaminase RutC from Shigella flexneri serotype X (strain 2002017).